Here is an 897-residue protein sequence, read N- to C-terminus: Protein SAP1 (897 aa).

Disordered stretches follow at residues 112-144, 195-219, 302-398, 413-438, and 456-561; these read EEPAPRNDMPSSKTYTNHSSSFTRSTEPPPVFQ, PSKPLSNNASRQHKNPIEHNDPPLK, QMSD…TKST, SKSNTKPIIKSNASSPTSSLTVPNSV, and KKVA…REEP. Positions 120–137 are enriched in polar residues; the sequence is MPSSKTYTNHSSSFTRST. Basic and acidic residues predominate over residues 209 to 219; it reads NPIEHNDPPLK. A compositionally biased stretch (low complexity) spans 307–321; that stretch reads SVTSSTSSNKSVSSS. Residues 364–380 show a composition bias toward polar residues; the sequence is LETSTTMDSSKIRNPQI. Residues 468–478 show a composition bias toward basic residues; it reads KKSHPILKSKT. Over residues 480–496 the composition is skewed to low complexity; it reads KVPNSSSKKTSSHPSRP. Polar residues predominate over residues 497–523; sequence VSNSKPYSHGASQNKKPSKNQTTSMSK. Ser536 carries the post-translational modification Phosphoserine. ATP is bound at residue 645–652; it reads GPPGTGKT.

The protein belongs to the AAA ATPase family. In terms of assembly, interacts with SPT2/SIN1.

The chain is Protein SAP1 (SAP1) from Saccharomyces cerevisiae (strain ATCC 204508 / S288c) (Baker's yeast).